The sequence spans 192 residues: Ion-translocating oxidoreductase complex subunit A (192 aa).

Helical transmembrane passes span 5–25 (ALILISTVLVNNFVLVKFLGL), 39–59 (TGMGLATTFVLTLSSVCSYLV), 65–85 (APLGLEYLRTIAFILVIAAVV), 102–122 (VLGIFLPLITTNCAVLGVALL), 134–154 (ALYGLGAAVGFSLVLVLFASI), and 171–191 (AIALITAGLMSLGFMGFIGLV).

Belongs to the NqrDE/RnfAE family. As to quaternary structure, the complex is composed of six subunits: RnfA, RnfB, RnfC, RnfD, RnfE and RnfG.

The protein resides in the cell inner membrane. In terms of biological role, part of a membrane-bound complex that couples electron transfer with translocation of ions across the membrane. This chain is Ion-translocating oxidoreductase complex subunit A, found in Thioalkalivibrio sulfidiphilus (strain HL-EbGR7).